The primary structure comprises 446 residues: MAANVNVMAAPTPARPRAWWSHLYVQVLAAIVAGVLLGHFWPAIGTELKPLGDGFIKLVKMIIAPVIFLTVATGIASIGGETKALGRVVGKAFAYFLFFSTLALIVGLVVANVVQPGAGMNIDPATLDAGAVAQYQAKAHEATLTAFLLDIIPVTFVSALTEGSILQALFVAILFGLALSHAGEPGRQVLGLLEKVSTVFFGLVGMLMKFAPIGAFGAMAFTIGKYGVESLANLGLLIATFYLTSLFFVIVILGAVAHFSGFSIFRLIAYLKAELLLVLGTSSSEAALPSLIEKLEKAGCAKPIVGLVVPTGYSFNLDGTNIYMTLAALFIAQAVGVDLSLGDQIALLLVAMVSSKGAAGVTGAGFITLAATLSIVPSVPVAGLALILGIDRFMSECRALTNFIGNALAAIVVAGWEKGLDREALARALAGEPAPLAAAPIETDTD.

The next 9 membrane-spanning stretches (helical) occupy residues 25–45 (VQVL…PAIG), 58–78 (LVKM…IASI), 93–113 (FAYF…VANV), 159–179 (ALTE…GLAL), 199–219 (VFFG…FGAM), 236–256 (LLIA…LGAV), 322–342 (IYMT…LSLG), 370–390 (AATL…ILGI), and 400–420 (LTNF…EKGL).

Belongs to the dicarboxylate/amino acid:cation symporter (DAACS) (TC 2.A.23) family.

Its subcellular location is the cell inner membrane. Its function is as follows. Responsible for the transport of dicarboxylates such as succinate, fumarate, and malate from the periplasm across the membrane. The chain is C4-dicarboxylate transport protein from Sphingopyxis alaskensis (strain DSM 13593 / LMG 18877 / RB2256) (Sphingomonas alaskensis).